The sequence spans 168 residues: Protein GRE1 (168 aa).

Positions 1-168 (MSNLLNKFAD…DDDSGNQGVW (168 aa)) are disordered. Basic and acidic residues-rich tracts occupy residues 8 to 20 (FADK…HDER) and 27 to 43 (DQTR…REFR). Polar residues-rich tracts occupy residues 56 to 81 (NQGN…GNDF) and 120 to 144 (TSGQ…SNIG).

It localises to the cytoplasm. This is Protein GRE1 (GRE1) from Saccharomyces cerevisiae (strain ATCC 204508 / S288c) (Baker's yeast).